The following is a 681-amino-acid chain: DNA-directed RNA polymerase subunit beta' (681 aa).

C69, C71, C87, and C90 together coordinate Zn(2+). Residues D489, D491, and D493 each coordinate Mg(2+).

It belongs to the RNA polymerase beta' chain family. RpoC1 subfamily. In plastids the minimal PEP RNA polymerase catalytic core is composed of four subunits: alpha, beta, beta', and beta''. When a (nuclear-encoded) sigma factor is associated with the core the holoenzyme is formed, which can initiate transcription. It depends on Mg(2+) as a cofactor. Zn(2+) is required as a cofactor.

It localises to the plastid. The protein localises to the chloroplast. The catalysed reaction is RNA(n) + a ribonucleoside 5'-triphosphate = RNA(n+1) + diphosphate. Its function is as follows. DNA-dependent RNA polymerase catalyzes the transcription of DNA into RNA using the four ribonucleoside triphosphates as substrates. This chain is DNA-directed RNA polymerase subunit beta', found in Nicotiana tomentosiformis (Tobacco).